The sequence spans 304 residues: Ribonuclease HII (304 aa).

Residues methionine 1–alanine 53 form a disordered region. Residues lysine 24–alanine 35 are compositionally biased toward basic residues. Over residues valine 36 to alanine 53 the composition is skewed to low complexity. Residues tryptophan 96 to glycine 284 enclose the RNase H type-2 domain. A divalent metal cation contacts are provided by aspartate 102, glutamate 103, and aspartate 193.

Belongs to the RNase HII family. The cofactor is Mn(2+). Requires Mg(2+) as cofactor.

Its subcellular location is the cytoplasm. It carries out the reaction Endonucleolytic cleavage to 5'-phosphomonoester.. Functionally, endonuclease that specifically degrades the RNA of RNA-DNA hybrids. This Rhodopseudomonas palustris (strain ATCC BAA-98 / CGA009) protein is Ribonuclease HII.